Reading from the N-terminus, the 330-residue chain is uncharacterized protein (330 aa).

The ABC transporter domain maps to 4–242 (LSIQNLVVEY…AGEVLFEQST (239 aa)). An ATP-binding site is contributed by 40–47 (GPSGCGKT). 210–330 (DRVVELTPDF…LIEHRALAND (121 aa)) lines the a nucleoside 3',5'-cyclic phosphate pocket.

This sequence belongs to the ABC transporter superfamily. The complex is composed of two ATP-binding proteins (MT0079), two transmembrane proteins (MT0078) and a solute-binding protein.

In terms of biological role, probably part of an ABC transporter complex. Probably responsible for energy coupling to the transport system. This is an uncharacterized protein from Mycobacterium tuberculosis (strain CDC 1551 / Oshkosh).